The sequence spans 280 residues: Uroporphyrinogen-III C-methyltransferase (280 aa).

S-adenosyl-L-homocysteine is bound by residues Pro24, 100–102 (GGD), 130–131 (TA), Met184, Ala213, and Ala241.

The protein belongs to the precorrin methyltransferase family. Homodimer.

It carries out the reaction uroporphyrinogen III + 2 S-adenosyl-L-methionine = precorrin-2 + 2 S-adenosyl-L-homocysteine + H(+). The catalysed reaction is uroporphyrinogen III + S-adenosyl-L-methionine = precorrin-1 + S-adenosyl-L-homocysteine + H(+). The enzyme catalyses precorrin-1 + S-adenosyl-L-methionine = precorrin-2 + S-adenosyl-L-homocysteine. The protein operates within cofactor biosynthesis; adenosylcobalamin biosynthesis; precorrin-2 from uroporphyrinogen III: step 1/1. Its pathway is porphyrin-containing compound metabolism; siroheme biosynthesis; precorrin-2 from uroporphyrinogen III: step 1/1. Its activity is regulated as follows. S-adenosylhomocysteine is an extremely powerful competitive inhibitor of the uroporphyrinogen III methylation. SUMT exhibits a substrate inhibition phenomenon at uroporphyrinogen III concentrations above 2 uM; this property might play a regulatory role in cobalamin biosynthesis. The enzyme activity is completely insensitive to feedback inhibition by cobalamin and corrinoid intermediates. In terms of biological role, catalyzes the two successive C-2 and C-7 methylation reactions involved in the conversion of uroporphyrinogen III to precorrin-2 via the intermediate formation of precorrin-1. It is a step in the biosynthesis of both cobalamin (vitamin B12) and siroheme. Neither uroporphyrin III nor the chlorin (factor I) is a substrate of SUMT. This Sinorhizobium sp protein is Uroporphyrinogen-III C-methyltransferase.